The primary structure comprises 489 residues: N-succinylglutamate 5-semialdehyde dehydrogenase (489 aa).

An NAD(+)-binding site is contributed by 223–228 (GSSRTG). Residues E246 and C280 contribute to the active site.

The protein belongs to the aldehyde dehydrogenase family. AstD subfamily.

The enzyme catalyses N-succinyl-L-glutamate 5-semialdehyde + NAD(+) + H2O = N-succinyl-L-glutamate + NADH + 2 H(+). It participates in amino-acid degradation; L-arginine degradation via AST pathway; L-glutamate and succinate from L-arginine: step 4/5. Catalyzes the NAD-dependent reduction of succinylglutamate semialdehyde into succinylglutamate. In Aeromonas salmonicida (strain A449), this protein is N-succinylglutamate 5-semialdehyde dehydrogenase.